Consider the following 202-residue polypeptide: Small ribosomal subunit protein uS4c (202 aa).

Residues 90–158 (MRLDNIIFRL…ITKNIELSQK (69 aa)) form the S4 RNA-binding domain.

Belongs to the universal ribosomal protein uS4 family. As to quaternary structure, part of the 30S ribosomal subunit. Contacts protein S5. The interaction surface between S4 and S5 is involved in control of translational fidelity.

It localises to the plastid. Its subcellular location is the chloroplast. In terms of biological role, one of the primary rRNA binding proteins, it binds directly to 16S rRNA where it nucleates assembly of the body of the 30S subunit. Its function is as follows. With S5 and S12 plays an important role in translational accuracy. This is Small ribosomal subunit protein uS4c (rps4) from Marchantia romanica (Liverwort).